Reading from the N-terminus, the 125-residue chain is Glycine cleavage system H protein (125 aa).

Positions 22-104 constitute a Lipoyl-binding domain; sequence SYVIGITDFA…YDTGWILKLE (83 aa). Lys63 bears the N6-lipoyllysine mark.

The protein belongs to the GcvH family. The glycine cleavage system is composed of four proteins: P, T, L and H. (R)-lipoate serves as cofactor.

In terms of biological role, the glycine cleavage system catalyzes the degradation of glycine. The H protein shuttles the methylamine group of glycine from the P protein to the T protein. Functionally, is also involved in protein lipoylation via its role as an octanoyl/lipoyl carrier protein intermediate. The protein is Glycine cleavage system H protein of Listeria monocytogenes serotype 4b (strain CLIP80459).